The primary structure comprises 554 residues: Phosphomethylpyrimidine synthase (554 aa).

Residues asparagine 188, methionine 217, tyrosine 246, histidine 282, 302–304 (SRG), 343–346 (DGLR), and glutamate 382 contribute to the substrate site. Histidine 386 provides a ligand contact to Zn(2+). A substrate-binding site is contributed by tyrosine 409. Histidine 450 provides a ligand contact to Zn(2+). Residues cysteine 530, cysteine 533, and cysteine 538 each contribute to the [4Fe-4S] cluster site.

Belongs to the ThiC family. Homodimer. The cofactor is [4Fe-4S] cluster.

The enzyme catalyses 5-amino-1-(5-phospho-beta-D-ribosyl)imidazole + S-adenosyl-L-methionine = 4-amino-2-methyl-5-(phosphooxymethyl)pyrimidine + CO + 5'-deoxyadenosine + formate + L-methionine + 3 H(+). It participates in cofactor biosynthesis; thiamine diphosphate biosynthesis. In terms of biological role, catalyzes the synthesis of the hydroxymethylpyrimidine phosphate (HMP-P) moiety of thiamine from aminoimidazole ribotide (AIR) in a radical S-adenosyl-L-methionine (SAM)-dependent reaction. This Coxiella burnetii (strain RSA 493 / Nine Mile phase I) protein is Phosphomethylpyrimidine synthase.